The chain runs to 389 residues: Geodin cluster transcriptional coactivator gedD (389 aa).

The HTH iclR-type domain occupies 13–83 (LAWHVQLLAC…QPGQIMHTPL (71 aa)). A DNA-binding region (H-T-H motif) is located at residues 43–62 (VRDLAQLCGVSETTLSRVVR).

Its subcellular location is the nucleus. Its function is as follows. Transcriptional coactivator; part of the gene cluster that mediates the biosynthesis of geodin, an intermediate in the biosynthesis of other natural products. With gedR, coregulates the production of geodin. This Aspergillus terreus (strain NIH 2624 / FGSC A1156) protein is Geodin cluster transcriptional coactivator gedD (gedD).